Reading from the N-terminus, the 247-residue chain is PF03932 family protein CutC (247 aa).

This sequence belongs to the CutC family.

The protein localises to the cytoplasm. The polypeptide is PF03932 family protein CutC (Aliivibrio fischeri (strain MJ11) (Vibrio fischeri)).